The following is a 147-amino-acid chain: Nucleoside diphosphate kinase (147 aa).

ATP-binding residues include lysine 9, phenylalanine 57, arginine 85, threonine 91, arginine 102, and asparagine 112. The Pros-phosphohistidine intermediate role is filled by histidine 115.

Belongs to the NDK family. In terms of assembly, homotetramer. Mg(2+) serves as cofactor.

Its subcellular location is the cytoplasm. The catalysed reaction is a 2'-deoxyribonucleoside 5'-diphosphate + ATP = a 2'-deoxyribonucleoside 5'-triphosphate + ADP. The enzyme catalyses a ribonucleoside 5'-diphosphate + ATP = a ribonucleoside 5'-triphosphate + ADP. Its function is as follows. Major role in the synthesis of nucleoside triphosphates other than ATP. The ATP gamma phosphate is transferred to the NDP beta phosphate via a ping-pong mechanism, using a phosphorylated active-site intermediate. In Listeria monocytogenes serotype 4a (strain HCC23), this protein is Nucleoside diphosphate kinase.